Consider the following 414-residue polypeptide: Ornithine aminotransferase (414 aa).

C154 and C163 are oxidised to a cystine. An N6-(pyridoxal phosphate)lysine modification is found at K262.

The protein belongs to the class-III pyridoxal-phosphate-dependent aminotransferase family. Homodimer. Pyridoxal 5'-phosphate serves as cofactor. In terms of processing, the disulfide bond between Cys-154 and Cys-163 is reduced by TRX1 which increases OAT catalytic activity.

It localises to the cytoplasm. It carries out the reaction a 2-oxocarboxylate + L-ornithine = L-glutamate 5-semialdehyde + an L-alpha-amino acid. The enzyme catalyses L-ornithine + 2-oxoglutarate = L-glutamate 5-semialdehyde + L-glutamate. It participates in amino-acid biosynthesis; L-proline biosynthesis; L-glutamate 5-semialdehyde from L-ornithine: step 1/1. Its activity is regulated as follows. Unlike for mammalian OATs, activity is increased by TRX1-mediated reduction of the disulfide bond between Cys-154 and Cys-163. Binding to TRX1 may also induce conformational changes that facilitate substrate binding. Its function is as follows. The enzyme has a very narrow substrate specificity and can only catalyze the transamination of alpha-ketoglutarate with ornithine or N-acetylornithine and, to a lesser extent, of glutamate-5-semialdehyde with glutamate and alanine. The polypeptide is Ornithine aminotransferase (Plasmodium falciparum (isolate 3D7)).